Consider the following 145-residue polypeptide: D-aminoacyl-tRNA deacylase (145 aa).

Positions 137–138 match the Gly-cisPro motif, important for rejection of L-amino acids motif; sequence GP.

This sequence belongs to the DTD family. In terms of assembly, homodimer.

It localises to the cytoplasm. It carries out the reaction glycyl-tRNA(Ala) + H2O = tRNA(Ala) + glycine + H(+). The catalysed reaction is a D-aminoacyl-tRNA + H2O = a tRNA + a D-alpha-amino acid + H(+). Functionally, an aminoacyl-tRNA editing enzyme that deacylates mischarged D-aminoacyl-tRNAs. Also deacylates mischarged glycyl-tRNA(Ala), protecting cells against glycine mischarging by AlaRS. Acts via tRNA-based rather than protein-based catalysis; rejects L-amino acids rather than detecting D-amino acids in the active site. By recycling D-aminoacyl-tRNA to D-amino acids and free tRNA molecules, this enzyme counteracts the toxicity associated with the formation of D-aminoacyl-tRNA entities in vivo and helps enforce protein L-homochirality. The sequence is that of D-aminoacyl-tRNA deacylase from Shewanella woodyi (strain ATCC 51908 / MS32).